The following is a 307-amino-acid chain: Heparan sulfate glucosamine 3-O-sulfotransferase 1 (307 aa).

A signal peptide spans 1 to 20; it reads MAALLLGAVLLVAQPQLVPS. The N-linked (GlcNAc...) asparagine glycan is linked to Asn-48. 3'-phosphoadenylyl sulfate is bound by residues 64–68, Arg-147, and Ser-155; that span reads KGGTR. 3 N-linked (GlcNAc...) asparagine glycosylation sites follow: Asn-192, Asn-242, and Asn-249. Tyr-255 is a 3'-phosphoadenylyl sulfate binding site. Cys-256 and Cys-265 are disulfide-bonded. 270 to 274 is a 3'-phosphoadenylyl sulfate binding site; the sequence is KGRAH.

Belongs to the sulfotransferase 1 family. Highly expressed in the brain and kidney and weakly expressed in the heart, lung and placenta.

It localises to the golgi apparatus lumen. It carries out the reaction alpha-D-glucosaminyl-[heparan sulfate](n) + 3'-phosphoadenylyl sulfate = 3-sulfo-alpha-D-glucosaminyl-[heparan sulfate](n) + adenosine 3',5'-bisphosphate + H(+). In terms of biological role, sulfotransferase that utilizes 3'-phospho-5'-adenylyl sulfate (PAPS) to catalyze the transfer of a sulfo group to position 3 of glucosamine residues in heparan. Catalyzes the rate limiting step in the biosynthesis of heparan sulfate (HSact). This modification is a crucial step in the biosynthesis of anticoagulant heparan sulfate as it completes the structure of the antithrombin pentasaccharide binding site. This Homo sapiens (Human) protein is Heparan sulfate glucosamine 3-O-sulfotransferase 1 (HS3ST1).